The chain runs to 399 residues: S-adenosylmethionine synthase (399 aa).

His-17 contributes to the ATP binding site. Asp-19 contacts Mg(2+). Glu-45 is a binding site for K(+). The L-methionine site is built by Glu-58 and Gln-101. A flexible loop region spans residues 101–111; sequence QSPDIAQGVDK. Residues 176-178, 243-244, Asp-252, 258-259, and Lys-279 contribute to the ATP site; these read DGK, RF, and RK. L-methionine is bound at residue Asp-252. Residue Lys-283 coordinates L-methionine.

It belongs to the AdoMet synthase family. In terms of assembly, homotetramer; dimer of dimers. The cofactor is Mg(2+). K(+) is required as a cofactor.

The protein resides in the cytoplasm. The enzyme catalyses L-methionine + ATP + H2O = S-adenosyl-L-methionine + phosphate + diphosphate. It participates in amino-acid biosynthesis; S-adenosyl-L-methionine biosynthesis; S-adenosyl-L-methionine from L-methionine: step 1/1. Its function is as follows. Catalyzes the formation of S-adenosylmethionine (AdoMet) from methionine and ATP. The overall synthetic reaction is composed of two sequential steps, AdoMet formation and the subsequent tripolyphosphate hydrolysis which occurs prior to release of AdoMet from the enzyme. The protein is S-adenosylmethionine synthase of Staphylococcus epidermidis (strain ATCC 35984 / DSM 28319 / BCRC 17069 / CCUG 31568 / BM 3577 / RP62A).